The following is a 307-amino-acid chain: Myeloid-associated differentiation marker-like protein 2 (307 aa).

2 consecutive MARVEL domains span residues 17-154 (AVTS…ARPG) and 159-303 (YMAT…RIRF). 7 consecutive transmembrane segments (helical) span residues 53–73 (FCVA…ACEF), 90–110 (AFAM…PLYF), 129–149 (LAAS…VALT), 163–183 (VSGL…GALV), 198–218 (VAVY…SVLG), 232–252 (VVYT…WPVF), and 278–298 (LVVA…LAYS).

It belongs to the MAL family.

It localises to the membrane. The polypeptide is Myeloid-associated differentiation marker-like protein 2 (MYADML2) (Bos taurus (Bovine)).